The chain runs to 195 residues: Protein GrpE (195 aa).

A disordered region spans residues 1-60; it reads MAKDEEKNSQASAAPNEGEVKAKQEQTSAKEPAAKAGETEKVADLQKQVEELTKQLDDQK. Residues 37-60 show a composition bias toward basic and acidic residues; sequence GETEKVADLQKQVEELTKQLDDQK.

This sequence belongs to the GrpE family. As to quaternary structure, homodimer.

It localises to the cytoplasm. Participates actively in the response to hyperosmotic and heat shock by preventing the aggregation of stress-denatured proteins, in association with DnaK and GrpE. It is the nucleotide exchange factor for DnaK and may function as a thermosensor. Unfolded proteins bind initially to DnaJ; upon interaction with the DnaJ-bound protein, DnaK hydrolyzes its bound ATP, resulting in the formation of a stable complex. GrpE releases ADP from DnaK; ATP binding to DnaK triggers the release of the substrate protein, thus completing the reaction cycle. Several rounds of ATP-dependent interactions between DnaJ, DnaK and GrpE are required for fully efficient folding. This is Protein GrpE from Limosilactobacillus fermentum (strain NBRC 3956 / LMG 18251) (Lactobacillus fermentum).